The sequence spans 345 residues: Holliday junction branch migration complex subunit RuvB (345 aa).

A large ATPase domain (RuvB-L) region spans residues L3 to Y187. ATP is bound by residues L26, R27, G68, K71, T72, T73, E134–F136, R177, Y187, and R224. Mg(2+) is bound at residue T72. Positions S188 to E259 are small ATPAse domain (RuvB-S). Residues S262 to L345 form a head domain (RuvB-H) region. DNA-binding residues include R317 and R322.

The protein belongs to the RuvB family. As to quaternary structure, homohexamer. Forms an RuvA(8)-RuvB(12)-Holliday junction (HJ) complex. HJ DNA is sandwiched between 2 RuvA tetramers; dsDNA enters through RuvA and exits via RuvB. An RuvB hexamer assembles on each DNA strand where it exits the tetramer. Each RuvB hexamer is contacted by two RuvA subunits (via domain III) on 2 adjacent RuvB subunits; this complex drives branch migration. In the full resolvosome a probable DNA-RuvA(4)-RuvB(12)-RuvC(2) complex forms which resolves the HJ.

Its subcellular location is the cytoplasm. The enzyme catalyses ATP + H2O = ADP + phosphate + H(+). Its function is as follows. The RuvA-RuvB-RuvC complex processes Holliday junction (HJ) DNA during genetic recombination and DNA repair, while the RuvA-RuvB complex plays an important role in the rescue of blocked DNA replication forks via replication fork reversal (RFR). RuvA specifically binds to HJ cruciform DNA, conferring on it an open structure. The RuvB hexamer acts as an ATP-dependent pump, pulling dsDNA into and through the RuvAB complex. RuvB forms 2 homohexamers on either side of HJ DNA bound by 1 or 2 RuvA tetramers; 4 subunits per hexamer contact DNA at a time. Coordinated motions by a converter formed by DNA-disengaged RuvB subunits stimulates ATP hydrolysis and nucleotide exchange. Immobilization of the converter enables RuvB to convert the ATP-contained energy into a lever motion, pulling 2 nucleotides of DNA out of the RuvA tetramer per ATP hydrolyzed, thus driving DNA branch migration. The RuvB motors rotate together with the DNA substrate, which together with the progressing nucleotide cycle form the mechanistic basis for DNA recombination by continuous HJ branch migration. Branch migration allows RuvC to scan DNA until it finds its consensus sequence, where it cleaves and resolves cruciform DNA. The protein is Holliday junction branch migration complex subunit RuvB of Tropheryma whipplei (strain TW08/27) (Whipple's bacillus).